Consider the following 247-residue polypeptide: uncharacterized protein (247 aa).

The next 2 membrane-spanning stretches (helical) occupy residues leucine 11 to valine 31 and phenylalanine 39 to leucine 59.

It is found in the cell membrane. This is an uncharacterized protein from Haemophilus influenzae (strain ATCC 51907 / DSM 11121 / KW20 / Rd).